The sequence spans 130 residues: Small ribosomal subunit protein uS9 (130 aa).

The span at 99–110 (KKAGFLTRDPRM) shows a compositional bias: basic and acidic residues. The tract at residues 99-130 (KKAGFLTRDPRMKERKKYGLKKARRAPQFSKR) is disordered. Residues 111-130 (KERKKYGLKKARRAPQFSKR) show a composition bias toward basic residues.

It belongs to the universal ribosomal protein uS9 family.

This Clostridium botulinum (strain Alaska E43 / Type E3) protein is Small ribosomal subunit protein uS9.